Reading from the N-terminus, the 381-residue chain is Estradiol 17-beta-dehydrogenase 2 (381 aa).

Residues 4–24 traverse the membrane as a helical; Signal-anchor for type II membrane protein segment; that stretch reads FASESAWLCLAAAAVLGGTLL. NAD(+) is bound at residue 83–112; it reads QKAVLVTGADSGFGHGLAKHLDKLGFTVFA. S220 is a binding site for substrate. The active-site Proton acceptor is Y233.

Belongs to the short-chain dehydrogenases/reductases (SDR) family. In terms of assembly, homodimer.

The protein resides in the endoplasmic reticulum membrane. It carries out the reaction 17beta-estradiol + NAD(+) = estrone + NADH + H(+). The catalysed reaction is testosterone + NAD(+) = androst-4-ene-3,17-dione + NADH + H(+). It catalyses the reaction 17beta-hydroxy-5alpha-androstan-3-one + NAD(+) = 5alpha-androstan-3,17-dione + NADH + H(+). The enzyme catalyses (20S)-hydroxypregn-4-en-3-one + NAD(+) = progesterone + NADH + H(+). Its function is as follows. Catalyzes the NAD-dependent oxidation of highly active 17beta-hydroxysteroids, such as estradiol (E2), testosterone (T), and dihydrotestosterone (DHT), to their less active forms and thus regulates the biological potency of these steroids. Oxidizes estradiol to estrone, testosterone to androstenedione, and dihydrotestosterone to 5alpha-androstan-3,17-dione. Also has 20-alpha-HSD activity. This is Estradiol 17-beta-dehydrogenase 2 (Hsd17b2) from Mus musculus (Mouse).